Here is a 631-residue protein sequence, read N- to C-terminus: Polycomb group protein EMBRYONIC FLOWER 2 (631 aa).

Residues 324 to 347 form a C2H2-type zinc finger; it reads FSCPFCLVKCASFKGLRYHLPSTH. Positions 424–446 are enriched in basic and acidic residues; it reads DDAHSVRSEKSRIPPGKHYERIG. The tract at residues 424–465 is disordered; that stretch reads DDAHSVRSEKSRIPPGKHYERIGGAESGQRVPPGTSPADVQS. The VEFS-box stretch occupies residues 505-583; sequence RQFFHSHRAQ…GHIPWACEAF (79 aa).

The protein belongs to the VEFS (VRN2-EMF2-FIS2-SU(Z)12) family. In terms of assembly, in plants, PcG complexes are probably composed of a member of the EZ family (CLF or MEA), FIE, and a member of the VEFS family (FIS2, VRN2 or EMF2). Binds to ALP1. Widely expressed throughout the life cycle with higher levels in proliferating tissues. Expressed in both vegetative and the reproductive shoot meristems.

Its subcellular location is the nucleus. Its function is as follows. Polycomb group (PcG) protein. Involved in flowering processes by repressing unknown target genes and preventing reproductive development. Participates in polycomb group (PcG) protein complex-mediated (probably in complex with EMF1) silencing of the flower homeotic genes AGAMOUS (AG), PISTILLATA (PI), and APETALA3 (AP3), as well as of some regulatory genes such as ABSCISIC ACID INSENSITIVE3 (ABI3), LONG VEGETATIVE PHASE1 (LOV1), and FLOWERING LOCUS C (FLC) during vegetative development, by mediating trimethylation of histone 3 lysine 27 on the AG chromatin (H3K27me3). PcG proteins act by forming multiprotein complexes, which are required to maintain the transcriptionally repressive state of homeotic genes throughout development. PcG proteins are not required to initiate repression, but to maintain it during later stages of development. They probably act via the methylation of histones, rendering chromatin heritably changed in its expressibility. This is Polycomb group protein EMBRYONIC FLOWER 2 (EMF2) from Arabidopsis thaliana (Mouse-ear cress).